Here is an 88-residue protein sequence, read N- to C-terminus: MLSRLFTVPAILLATLGSAATLAPREESACQRVCCDALVQSTSRGLVGINCNRGGIDCGFSGQIASCCAAIVPVGARQGTGVQCQRGN.

Positions 1 to 21 (MLSRLFTVPAILLATLGSAAT) are cleaved as a signal peptide. Cystine bridges form between cysteine 30–cysteine 67, cysteine 34–cysteine 58, cysteine 35–cysteine 51, and cysteine 68–cysteine 84.

It belongs to the fungal hydrophobin family.

It localises to the secreted. The protein resides in the cell wall. It is found in the vacuole. Its subcellular location is the cytoplasmic vesicle. In terms of biological role, aerial growth, conidiation, and dispersal of filamentous fungi in the environment rely upon a capability of their secreting small amphipathic proteins called hydrophobins (HPBs) with low sequence identity. Class I can self-assemble into an outermost layer of rodlet bundles on aerial cell surfaces, conferring cellular hydrophobicity that supports fungal growth, development and dispersal; whereas Class II form highly ordered films at water-air interfaces through intermolecular interactions but contribute nothing to the rodlet structure. Hyd1F contributes to certain cell wall-related features, such as hydrophobicity but is not involved in cell wall-related events during fungal proliferation in host hemocoel. Does not contribute to conidial hydrophobicity. The polypeptide is Class I hydrophobin F (Beauveria bassiana (strain ARSEF 2860) (White muscardine disease fungus)).